The sequence spans 114 residues: Fumarate reductase subunit D (114 aa).

Helical transmembrane passes span 24-44 (VSAI…PFGL), 50-70 (LITF…TIFP), and 92-112 (GGFI…FAVI).

This sequence belongs to the FrdD family. In terms of assembly, part of an enzyme complex containing four subunits: a flavoprotein (FrdA), an iron-sulfur protein (FrdB), and two hydrophobic anchor proteins (FrdC and FrdD).

The protein resides in the cell inner membrane. Its function is as follows. Anchors the catalytic components of the fumarate reductase complex to the cell membrane, binds quinones. This is Fumarate reductase subunit D from Haemophilus influenzae (strain PittGG).